Consider the following 266-residue polypeptide: Glucosamine-6-phosphate deaminase (266 aa).

Aspartate 72 (proton acceptor; for enolization step) is an active-site residue. Aspartate 141 acts as the For ring-opening step in catalysis. Histidine 143 (proton acceptor; for ring-opening step) is an active-site residue. Catalysis depends on glutamate 148, which acts as the For ring-opening step.

Belongs to the glucosamine/galactosamine-6-phosphate isomerase family. NagB subfamily. Homohexamer.

The enzyme catalyses alpha-D-glucosamine 6-phosphate + H2O = beta-D-fructose 6-phosphate + NH4(+). It functions in the pathway amino-sugar metabolism; N-acetylneuraminate degradation; D-fructose 6-phosphate from N-acetylneuraminate: step 5/5. Its activity is regulated as follows. Allosterically activated by N-acetylglucosamine 6-phosphate (GlcNAc6P). Its function is as follows. Catalyzes the reversible isomerization-deamination of glucosamine 6-phosphate (GlcN6P) to form fructose 6-phosphate (Fru6P) and ammonium ion. The sequence is that of Glucosamine-6-phosphate deaminase from Aeromonas salmonicida (strain A449).